The primary structure comprises 20 residues: Elongation factor Tu (20 aa).

The protein belongs to the GTP-binding elongation factor family. EF-Tu/EF-1A subfamily. Monomer.

The protein resides in the cytoplasm. This protein promotes the GTP-dependent binding of aminoacyl-tRNA to the A-site of ribosomes during protein biosynthesis. The protein is Elongation factor Tu (tuf) of Mycoplasmopsis synoviae (Mycoplasma synoviae).